Here is a 341-residue protein sequence, read N- to C-terminus: Methionine import ATP-binding protein MetN 3 (341 aa).

An ABC transporter domain is found at 2–241; the sequence is ILLENVKKIY…PQQDITKRFV (240 aa). Residue 38–45 participates in ATP binding; sequence GYSGAGKS.

The protein belongs to the ABC transporter superfamily. Methionine importer (TC 3.A.1.24) family. In terms of assembly, the complex is composed of two ATP-binding proteins (MetN), two transmembrane proteins (MetI) and a solute-binding protein (MetQ).

It is found in the cell membrane. It catalyses the reaction L-methionine(out) + ATP + H2O = L-methionine(in) + ADP + phosphate + H(+). The catalysed reaction is D-methionine(out) + ATP + H2O = D-methionine(in) + ADP + phosphate + H(+). Its function is as follows. Part of the ABC transporter complex MetNIQ involved in methionine import. Responsible for energy coupling to the transport system. The sequence is that of Methionine import ATP-binding protein MetN 3 from Bacillus cereus (strain ZK / E33L).